The following is a 152-amino-acid chain: Diamine acetyltransferase (152 aa).

Positions 5–152 (FEVRKATIDD…SFLDLTPKSD (148 aa)) constitute an N-acetyltransferase domain. Catalysis depends on Tyr-127, which acts as the Proton donor.

The protein belongs to the acetyltransferase family. In terms of assembly, homotetramer.

It is found in the cytoplasm. It carries out the reaction an alkane-alpha,omega-diamine + acetyl-CoA = an N-acetylalkane-alpha,omega-diamine + CoA + H(+). It functions in the pathway amine and polyamine degradation; putrescine degradation; N-acetylputrescine from putrescine: step 1/1. Functionally, enzyme which catalyzes the acetylation of polyamines. Displays higher substrate specificity for spermine than for spermidine. May function to acetylate host-derived polyamines, thus alleviating the necessity for de novo synthesis of these molecules. The chain is Diamine acetyltransferase from Cryptosporidium parvum (strain Iowa II).